The following is a 595-amino-acid chain: Protein kinase C iota type (595 aa).

The span at 1-12 shows a compositional bias: polar residues; the sequence is MPTQRDSSTMSH. Residues 1-21 are disordered; that stretch reads MPTQRDSSTMSHTVACGGGGD. At Pro-2 the chain carries N-acetylproline. Positions 2-28 are required for interaction with RAB2; the sequence is PTQRDSSTMSHTVACGGGGDHSHQVRV. Residues 2 to 252 form a regulatory domain region; sequence PTQRDSSTMS…KASSSLGLQD (251 aa). Position 3 is a phosphothreonine (Thr-3). Phosphoserine is present on residues Ser-7 and Ser-8. Position 9 is a phosphothreonine (Thr-9). In terms of domain architecture, PB1 spans 25 to 108; the sequence is QVRVKAYYRG…SELLIHVFPC (84 aa). An interaction with PARD6A region spans residues 72–91; the sequence is DEEGDPCTVSSQLELEEAFR. Residues 125 to 134 carry the Pseudosubstrate motif; it reads YRRGARRWRK. The segment at 140-190 adopts a Phorbol-ester/DAG-type zinc-finger fold; that stretch reads GHTFQAKRFNRRAHCAICTDRIWGLGRQGYKCINCKLLVHKKCHKLVTIEC. The Protein kinase domain maps to 253-521; the sequence is FDLLRVIGRG…FADIQGHPFF (269 aa). 259–267 is an ATP binding site; it reads IGRGSYAKV. Tyr-264 and Tyr-279 each carry phosphotyrosine; by SRC. Lys-282 lines the ATP pocket. At Tyr-333 the chain carries Phosphotyrosine; by SRC. Asp-377 functions as the Proton acceptor in the catalytic mechanism. Phosphothreonine occurs at positions 411 and 563. The AGC-kinase C-terminal domain occupies 522-593; the sequence is RNVDWDMMEQ…INPLLMSAEE (72 aa).

It belongs to the protein kinase superfamily. AGC Ser/Thr protein kinase family. PKC subfamily. In terms of assembly, forms a complex with SQSTM1 and MP2K5. Interacts directly with SQSTM1. Interacts with IKBKB. Interacts with PARD6A, PARD6B and PARD6G. Part of a quaternary complex containing aPKC, PARD3, a PARD6 protein (PARD6A, PARD6B or PARD6G) and a GTPase protein (CDC42 or RAC1). Part of a complex with LLGL1 and PARD6B. Interacts with ADAP1/CENTA1. Interaction with SMG1, through the ZN-finger domain, activates the kinase activity. Interacts with CDK7. Forms a complex with RAB2A and GAPDH involved in recruitment onto the membrane of vesicular tubular clusters (VTCs). Interacts with ECT2 ('Thr-359' phosphorylated form). Interacts with VAMP2. Interacts with WDFY2 (via WD repeats 1-3). In terms of processing, phosphorylation at Thr-411 in the activation loop is not mandatory for activation. Upon neuronal growth factor (NGF) stimulation, phosphorylated by SRC at Tyr-264, Tyr-279 and Tyr-333. Phosphorylation on Tyr-264 facilitates binding to KPNB1/importin-beta regulating entry of PRKCI into the nucleus. Phosphorylation on Tyr-333 is important for NF-kappa-B stimulation. Phosphorylated at Thr-563 during the initial phase of long term potentiation.

It is found in the cytoplasm. The protein resides in the membrane. It localises to the endosome. The protein localises to the nucleus. The catalysed reaction is L-seryl-[protein] + ATP = O-phospho-L-seryl-[protein] + ADP + H(+). It carries out the reaction L-threonyl-[protein] + ATP = O-phospho-L-threonyl-[protein] + ADP + H(+). Atypical PKCs (PRKCI and PRKCZ) exhibit an elevated basal enzymatic activity (that may be due to the interaction with SMG1 or SQSTM1) and are not regulated by diacylglycerol, phosphatidylserine, phorbol esters or calcium ions. Two specific sites, Thr-411 (activation loop of the kinase domain) and Thr-563 (turn motif), need to be phosphorylated for its full activation. Might also be a target for novel lipid activators that are elevated during nutrient-stimulated insulin secretion. Functionally, calcium- and diacylglycerol-independent serine/ threonine-protein kinase that plays a general protective role against apoptotic stimuli, is involved in NF-kappa-B activation, cell survival, differentiation and polarity, and contributes to the regulation of microtubule dynamics in the early secretory pathway. Is necessary for BCR-ABL oncogene-mediated resistance to apoptotic drug in leukemia cells, protecting leukemia cells against drug-induced apoptosis. In cultured neurons, prevents amyloid beta protein-induced apoptosis by interrupting cell death process at a very early step. In glioblastoma cells, may function downstream of phosphatidylinositol 3-kinase (PI3K) and PDPK1 in the promotion of cell survival by phosphorylating and inhibiting the pro-apoptotic factor BAD. Can form a protein complex in non-small cell lung cancer (NSCLC) cells with PARD6A and ECT2 and regulate ECT2 oncogenic activity by phosphorylation, which in turn promotes transformed growth and invasion. In response to nerve growth factor (NGF), acts downstream of SRC to phosphorylate and activate IRAK1, allowing the subsequent activation of NF-kappa-B and neuronal cell survival. Functions in the organization of the apical domain in epithelial cells by phosphorylating EZR. This step is crucial for activation and normal distribution of EZR at the early stages of intestinal epithelial cell differentiation. Forms a protein complex with LLGL1 and PARD6B independently of PARD3 to regulate epithelial cell polarity. Plays a role in microtubule dynamics in the early secretory pathway through interaction with RAB2A and GAPDH and recruitment to vesicular tubular clusters (VTCs). In human coronary artery endothelial cells (HCAEC), is activated by saturated fatty acids and mediates lipid-induced apoptosis. Downstream of PI3K is required for insulin-stimulated glucose transport. Activates RAB4A and promotes its association with KIF3A which is required for the insulin-induced SLC2A4/GLUT4 translocation in adipocytes. Is essential in early embryogenesis and development of differentiating photoreceptors by playing a role in the establishment of epithelial and neuronal polarity. Involved in early synaptic long term potentiation phase in CA1 hippocampal cells and short term memory formation. The chain is Protein kinase C iota type (Prkci) from Mus musculus (Mouse).